The following is a 176-amino-acid chain: Xanthine-guanine phosphoribosyltransferase (176 aa).

Residues 51-52 (RG), Arg-88, and 111-119 (DDLVDSGKT) each bind 5-phospho-alpha-D-ribose 1-diphosphate. Residue Arg-88 participates in GMP binding. Asp-112 lines the Mg(2+) pocket. Positions 115 and 158 each coordinate guanine. 2 residues coordinate xanthine: Asp-115 and Ile-158. GMP-binding positions include 115-119 (DSGKT) and 157-158 (WI).

The protein belongs to the purine/pyrimidine phosphoribosyltransferase family. XGPT subfamily. Homotetramer. The cofactor is Mg(2+).

The protein resides in the cell inner membrane. It carries out the reaction GMP + diphosphate = guanine + 5-phospho-alpha-D-ribose 1-diphosphate. The catalysed reaction is XMP + diphosphate = xanthine + 5-phospho-alpha-D-ribose 1-diphosphate. It catalyses the reaction IMP + diphosphate = hypoxanthine + 5-phospho-alpha-D-ribose 1-diphosphate. The protein operates within purine metabolism; GMP biosynthesis via salvage pathway; GMP from guanine: step 1/1. It functions in the pathway purine metabolism; XMP biosynthesis via salvage pathway; XMP from xanthine: step 1/1. Its function is as follows. Purine salvage pathway enzyme that catalyzes the transfer of the ribosyl-5-phosphate group from 5-phospho-alpha-D-ribose 1-diphosphate (PRPP) to the N9 position of the 6-oxopurines guanine and xanthine to form the corresponding ribonucleotides GMP (guanosine 5'-monophosphate) and XMP (xanthosine 5'-monophosphate), with the release of PPi. To a lesser extent, also acts on hypoxanthine. The protein is Xanthine-guanine phosphoribosyltransferase of Roseobacter denitrificans (strain ATCC 33942 / OCh 114) (Erythrobacter sp. (strain OCh 114)).